The chain runs to 84 residues: uncharacterized protein (84 aa).

Residues alanine 10–histidine 32 traverse the membrane as a helical segment.

The protein resides in the membrane. This is an uncharacterized protein from Saccharomyces cerevisiae (strain ATCC 204508 / S288c) (Baker's yeast).